Here is a 247-residue protein sequence, read N- to C-terminus: DNA polymerase sliding clamp (247 aa).

This sequence belongs to the PCNA family. In terms of assembly, homotrimer. The subunits circularize to form a toroid; DNA passes through its center. Replication factor C (RFC) is required to load the toroid on the DNA.

Its function is as follows. Sliding clamp subunit that acts as a moving platform for DNA processing. Responsible for tethering the catalytic subunit of DNA polymerase and other proteins to DNA during high-speed replication. This is DNA polymerase sliding clamp from Methanoregula boonei (strain DSM 21154 / JCM 14090 / 6A8).